The sequence spans 225 residues: Ribosomal RNA small subunit methyltransferase G (225 aa).

S-adenosyl-L-methionine contacts are provided by residues Gly-71, Leu-76, 121-122 (AE), and Arg-139. The interval 204-225 (VVEARRATPSNGRGRPGRSSRR) is disordered.

It belongs to the methyltransferase superfamily. RNA methyltransferase RsmG family.

The protein resides in the cytoplasm. Specifically methylates the N7 position of guanine in position 518 of 16S rRNA. The protein is Ribosomal RNA small subunit methyltransferase G of Mycobacterium sp. (strain JLS).